Consider the following 121-residue polypeptide: Type II secretion system protein I (121 aa).

Positions 1-6 (MKKQSG) are cleaved as a propeptide — leader sequence. Position 7 is an N-methylmethionine (methionine 7). A helical membrane pass occupies residues 7–27 (MTLIEVMVALVVFALAGLAVM).

It belongs to the GSP I family. Type II secretion is composed of four main components: the outer membrane complex, the inner membrane complex, the cytoplasmic secretion ATPase and the periplasm-spanning pseudopilus. Interacts with core component PulG. Post-translationally, cleaved by prepilin peptidase. In terms of processing, methylated by prepilin peptidase at the amino group of the N-terminal methionine once the leader sequence is cleaved by prepilin peptidase.

It is found in the cell inner membrane. Functionally, component of the type II secretion system required for the energy-dependent secretion of extracellular factors such as proteases and toxins from the periplasm. Part of the pseudopilus tip complex that is critical for the recognition and binding of secretion substrates. In Klebsiella pneumoniae, this protein is Type II secretion system protein I (pulI).